A 92-amino-acid chain; its full sequence is Serine protease inhibitor I/II (92 aa).

The signal sequence occupies residues 1–19; sequence MKLALALCAAFLLVVLVQA. 2 consecutive Pacifastin domains span residues 20–54 and 57–92; these read EQECTPGQTKKQDCNTCNCTPTGVWACTRKGCPPH and EVTCEPGTTFKDKCNTCRCGSDGKSAACTLKACPQK. 6 disulfide bridges follow: Cys23-Cys38, Cys33-Cys51, Cys36-Cys46, Cys60-Cys75, Cys70-Cys89, and Cys73-Cys84.

This sequence belongs to the protease inhibitor I19 family. In terms of tissue distribution, expressed in hemolymph, ovaries, testes and fat body of adults but are absent in the gut. Also present in larval hemolymph and fat body.

Its subcellular location is the secreted. In terms of biological role, in vitro, is active against alpha-chymotrypsin and trypsin. Its function is as follows. In vitro, is active against alpha-chymotrypsin and pancreatic elastase. The protein is Serine protease inhibitor I/II of Schistocerca gregaria (Desert locust).